The chain runs to 107 residues: Nucleoid-associated protein Oant_0022 (107 aa).

It belongs to the YbaB/EbfC family. As to quaternary structure, homodimer.

The protein resides in the cytoplasm. It localises to the nucleoid. In terms of biological role, binds to DNA and alters its conformation. May be involved in regulation of gene expression, nucleoid organization and DNA protection. This chain is Nucleoid-associated protein Oant_0022, found in Brucella anthropi (strain ATCC 49188 / DSM 6882 / CCUG 24695 / JCM 21032 / LMG 3331 / NBRC 15819 / NCTC 12168 / Alc 37) (Ochrobactrum anthropi).